The chain runs to 314 residues: MTSIESHPEQYWAAAGRPGPVPLALGPVHPGGPTLIDLLMALFGLSTNADLGGANADIEGDDTDRRAHAADAARKFSANEANAAEQMQGVGAQGMAQMASGIGGALSGALGGVMGPLTQLPQQAMQAGQGAMQPLMSAMQQAQGADGLAAVDGARLLDSIGGEPGLGSGAGGGDVGGGGAGGTTPTGYLGPPPVPTSSPPTTPAGAPTKSATMPPPGGASPASAHMGAAGMPMVPPGAMGARGEGSGQEKPVEKRLTAPAVPNGQPVKGRLTVPPSAPTTKPTDGKPVVRRRILLPEHKDFGRIAPDEKTDAGE.

2 helical membrane passes run 23–43 (LALG…MALF) and 98–118 (MASG…GPLT). Residues 165-184 (GLGSGAGGGDVGGGGAGGTT) show a composition bias toward gly residues. The segment at 165 to 314 (GLGSGAGGGD…APDEKTDAGE (150 aa)) is disordered. A compositionally biased stretch (pro residues) spans 190–202 (GPPPVPTSSPPTT). Composition is skewed to low complexity over residues 203–212 (PAGAPTKSAT) and 219–232 (ASPA…AGMP). Residues 221–241 (PASAHMGAAGMPMVPPGAMGA) form a helical membrane-spanning segment. Residues 294–314 (LLPEHKDFGRIAPDEKTDAGE) show a composition bias toward basic and acidic residues.

It is found in the cell membrane. This is an uncharacterized protein from Mycobacterium tuberculosis (strain ATCC 25618 / H37Rv).